Reading from the N-terminus, the 397-residue chain is Dual specificity mitogen-activated protein kinase kinase 4 (397 aa).

A disordered region spans residues 1-38; that stretch reads MAAPSPSGGGGSGGGGGTPGPIGPPASGHPAVSSMQGK. Residue alanine 2 is modified to N-acetylalanine. Residues 7–20 are compositionally biased toward gly residues; that stretch reads SGGGGSGGGGGTPG. Residues 35 to 50 form a d domain region; that stretch reads MQGKRKALKLNFANPP. An Asymmetric dimethylarginine; alternate modification is found at arginine 56. Arginine 56 is subject to Omega-N-methylarginine; alternate. The residue at position 88 (serine 88) is a Phosphoserine. In terms of domain architecture, Protein kinase spans 100 to 366; it reads LKDLGEIGRG…KELLKHPFIL (267 aa). ATP-binding positions include 106-114 and lysine 129; that span reads IGRGAYGSV. Aspartate 227 serves as the catalytic Proton acceptor. The residue at position 255 (serine 255) is a Phosphoserine. Residue threonine 259 is modified to Phosphothreonine. Residues 362–385 are DVD domain; sequence HPFILMYEERTVEVACYVCKILDQ.

Belongs to the protein kinase superfamily. STE Ser/Thr protein kinase family. MAP kinase kinase subfamily. In terms of assembly, interacts with SPAG9. Interacts (via its D domain) with its substrates MAPK8/JNK1, MAPK9/JNK2, MAPK10/JNK3, MAPK11 and MAPK14. Interacts (via its DVD domain) with MAP3Ks activators like MAP3K1/MEKK1 and MAP3K11/MLK3. Interacts with ARRB1, ARRB2 and MAPK8IP3/JIP3. Activated by phosphorylation on Ser-255 and Thr-259 by MAP kinase kinase kinases (MAP3Ks). Strong expression is detected in most of the central nervous system and in liver and thymus during early stages of development. While expression in nervous system increases over time, expression in fetal liver and thymus gradually decreases as embryogenesis proceeds. High level of expression in the central nervous system persists throughout postnatal development and remained at a stable level in adult brain.

It is found in the cytoplasm. The protein resides in the nucleus. The catalysed reaction is L-seryl-[protein] + ATP = O-phospho-L-seryl-[protein] + ADP + H(+). The enzyme catalyses L-threonyl-[protein] + ATP = O-phospho-L-threonyl-[protein] + ADP + H(+). It carries out the reaction L-tyrosyl-[protein] + ATP = O-phospho-L-tyrosyl-[protein] + ADP + H(+). With respect to regulation, activated in response to a variety of cellular stresses, including UV and gamma-irradiation, heat shock, hyperosmolarity, T-cell receptor stimulation, peroxide and inflammatory cytokines. Also activated by developmental cues. MAP2K4/MKK4 is activated by the majority of MKKKs, such as MAP3K5/ASK1, MAP3K1/MEKK1, MAP3K7/TAK1, MAP3K10/MLK2, MAP3K11/MLK3, MAP3K12/DLK and MAP3K13/LZK. In terms of biological role, dual specificity protein kinase which acts as an essential component of the MAP kinase signal transduction pathway. Essential component of the stress-activated protein kinase/c-Jun N-terminal kinase (SAP/JNK) signaling pathway. With MAP2K7/MKK7, is the one of the only known kinase to directly activate the stress-activated protein kinase/c-Jun N-terminal kinases MAPK8/JNK1, MAPK9/JNK2 and MAPK10/JNK3. MAP2K4/MKK4 and MAP2K7/MKK7 both activate the JNKs by phosphorylation, but they differ in their preference for the phosphorylation site in the Thr-Pro-Tyr motif. MAP2K4 shows preference for phosphorylation of the Tyr residue and MAP2K7/MKK7 for the Thr residue. The phosphorylation of the Thr residue by MAP2K7/MKK7 seems to be the prerequisite for JNK activation at least in response to pro-inflammatory cytokines, while other stimuli activate both MAP2K4/MKK4 and MAP2K7/MKK7 which synergistically phosphorylate JNKs. MAP2K4 is required for maintaining peripheral lymphoid homeostasis. The MKK/JNK signaling pathway is also involved in mitochondrial death signaling pathway, including the release cytochrome c, leading to apoptosis. Whereas MAP2K7/MKK7 exclusively activates JNKs, MAP2K4/MKK4 additionally activates the p38 MAPKs MAPK11, MAPK12, MAPK13 and MAPK14. This Mus musculus (Mouse) protein is Dual specificity mitogen-activated protein kinase kinase 4 (Map2k4).